We begin with the raw amino-acid sequence, 253 residues long: Indole-3-glycerol phosphate synthase (253 aa).

Belongs to the TrpC family.

It carries out the reaction 1-(2-carboxyphenylamino)-1-deoxy-D-ribulose 5-phosphate + H(+) = (1S,2R)-1-C-(indol-3-yl)glycerol 3-phosphate + CO2 + H2O. It functions in the pathway amino-acid biosynthesis; L-tryptophan biosynthesis; L-tryptophan from chorismate: step 4/5. The polypeptide is Indole-3-glycerol phosphate synthase (Exiguobacterium sp. (strain ATCC BAA-1283 / AT1b)).